The chain runs to 281 residues: Very long chain fatty acid elongase 7 (281 aa).

Alanine 2 carries the post-translational modification N-acetylalanine. At alanine 2–aspartate 27 the chain is on the lumenal side. A helical membrane pass occupies residues tryptophan 28 to valine 48. At threonine 49–asparagine 72 the chain is on the cytoplasmic side. Residues phenylalanine 73–isoleucine 93 traverse the membrane as a helical segment. The Lumenal segment spans residues glycine 94–arginine 115. Cysteine 99 and cysteine 231 form a disulfide bridge. Residues threonine 116 to leucine 136 form a helical membrane-spanning segment. 3-oxoeicosanoyl-CoA-binding residues include lysine 124, arginine 137, lysine 139, glutamine 142, and histidine 147. At arginine 137–glutamine 142 the chain is on the cytoplasmic side. Residues valine 143 to valine 162 form a helical membrane-spanning segment. The HxxHH motif motif lies at histidine 147 to histidine 151. The active-site Nucleophile is the histidine 150. The Lumenal portion of the chain corresponds to lysine 163 to threonine 171. Residues phenylalanine 172–glycine 194 form a helical membrane-spanning segment. Residues tyrosine 187, lysine 204, threonine 208, and glutamine 211 each contribute to the 3-oxoeicosanoyl-CoA site. Residues proline 195 to tyrosine 206 lie on the Cytoplasmic side of the membrane. A helical transmembrane segment spans residues leucine 207–phenylalanine 227. Over methionine 228–proline 236 the chain is Lumenal. A helical transmembrane segment spans residues valine 237–tryptophan 257. The Cytoplasmic segment spans residues tyrosine 258 to asparagine 281. Arginine 266 is a 3-oxoeicosanoyl-CoA binding site. The Di-lysine motif signature appears at lysine 277 to asparagine 281.

This sequence belongs to the ELO family. ELOVL7 subfamily. In terms of assembly, homodimer. Interacts with TECR. Expressed in most tissues except heart and skeletal muscle.

It localises to the endoplasmic reticulum membrane. It carries out the reaction a very-long-chain acyl-CoA + malonyl-CoA + H(+) = a very-long-chain 3-oxoacyl-CoA + CO2 + CoA. It catalyses the reaction eicosanoyl-CoA + malonyl-CoA + H(+) = 3-oxodocosanoyl-CoA + CO2 + CoA. The enzyme catalyses (5Z,8Z,11Z,14Z)-eicosatetraenoyl-CoA + malonyl-CoA + H(+) = (7Z,10Z,13Z,16Z)-3-oxodocosatetraenoyl-CoA + CO2 + CoA. The catalysed reaction is (6Z,9Z,12Z)-octadecatrienoyl-CoA + malonyl-CoA + H(+) = (8Z,11Z,14Z)-3-oxoeicosatrienoyl-CoA + CO2 + CoA. It carries out the reaction (9Z,12Z)-octadecadienoyl-CoA + malonyl-CoA + H(+) = (11Z,14Z)-3-oxoicosa-11,14-dienoyl-CoA + CO2 + CoA. It catalyses the reaction (9Z)-octadecenoyl-CoA + malonyl-CoA + H(+) = 3-oxo-(11Z)-eicosenoyl-CoA + CO2 + CoA. The enzyme catalyses octadecanoyl-CoA + malonyl-CoA + H(+) = 3-oxoeicosanoyl-CoA + CO2 + CoA. The catalysed reaction is hexadecanoyl-CoA + malonyl-CoA + H(+) = 3-oxooctadecanoyl-CoA + CO2 + CoA. It carries out the reaction (9Z,12Z,15Z)-octadecatrienoyl-CoA + malonyl-CoA + H(+) = (11Z,14Z,17Z)-3-oxoeicosatrienoyl-CoA + CO2 + CoA. It participates in lipid metabolism; fatty acid biosynthesis. Catalyzes the first and rate-limiting reaction of the four reactions that constitute the long-chain fatty acids elongation cycle. This endoplasmic reticulum-bound enzymatic process allows the addition of 2 carbons to the chain of long- and very long-chain fatty acids (VLCFAs) per cycle. Condensing enzyme with higher activity toward C18 acyl-CoAs, especially C18:3(n-3) acyl-CoAs and C18:3(n-6)-CoAs. Also active toward C20:4-, C18:0-, C18:1-, C18:2- and C16:0-CoAs, and weakly toward C20:0-CoA. Little or no activity toward C22:0-, C24:0-, or C26:0-CoAs. May participate in the production of saturated and polyunsaturated VLCFAs of different chain lengths that are involved in multiple biological processes as precursors of membrane lipids and lipid mediators. The sequence is that of Very long chain fatty acid elongase 7 from Homo sapiens (Human).